The sequence spans 298 residues: Nucleoid occlusion protein (298 aa).

Positions 152 to 171 (EALAQRLGKGQSTVANKLRL) form a DNA-binding region, H-T-H motif.

This sequence belongs to the ParB family.

The protein resides in the cytoplasm. It is found in the nucleoid. Functionally, effects nucleoid occlusion by binding relatively nonspecifically to DNA and preventing the assembly of the division machinery in the vicinity of the nucleoid, especially under conditions that disturb the cell cycle. It helps to coordinate cell division and chromosome segregation by preventing the formation of the Z ring through the nucleoid, which would cause chromosome breakage. This Lysinibacillus sphaericus (strain C3-41) protein is Nucleoid occlusion protein.